The sequence spans 66 residues: Large ribosomal subunit protein bL31 (66 aa).

Positions 16, 18, 36, and 39 each coordinate Zn(2+).

Belongs to the bacterial ribosomal protein bL31 family. Type A subfamily. Part of the 50S ribosomal subunit. The cofactor is Zn(2+).

Binds the 23S rRNA. This chain is Large ribosomal subunit protein bL31, found in Geobacillus thermodenitrificans (strain NG80-2).